We begin with the raw amino-acid sequence, 277 residues long: Phosphoenolpyruvate synthase regulatory protein (277 aa).

157-164 provides a ligand contact to ADP; the sequence is GVSRCGKT.

Belongs to the pyruvate, phosphate/water dikinase regulatory protein family. PSRP subfamily.

It catalyses the reaction [pyruvate, water dikinase] + ADP = [pyruvate, water dikinase]-phosphate + AMP + H(+). The enzyme catalyses [pyruvate, water dikinase]-phosphate + phosphate + H(+) = [pyruvate, water dikinase] + diphosphate. In terms of biological role, bifunctional serine/threonine kinase and phosphorylase involved in the regulation of the phosphoenolpyruvate synthase (PEPS) by catalyzing its phosphorylation/dephosphorylation. The protein is Phosphoenolpyruvate synthase regulatory protein of Escherichia coli O7:K1 (strain IAI39 / ExPEC).